The following is a 334-amino-acid chain: Leucine-rich repeat-containing protein 39 (334 aa).

LRR repeat units lie at residues 59 to 82 (EDGR…LLKL), 83 to 105 (NQLQ…IGRF), 106 to 128 (QHLI…IGLL), 129 to 151 (TRLQ…LSNC), 153 to 175 (SLEK…LSKL), 176 to 198 (LKLT…VLDM), 199 to 221 (PALE…LDRM), 223 to 244 (SLHT…IRNM), 245 to 269 (KNLG…EMTS), and 272 to 295 (FVNF…VDGE).

In terms of assembly, interacts with MYH7 (via C-terminus). As to expression, expressed in heart and skeletal muscle (at protein level). Also detected in kidney (at protein level). Not detected in other tissues tested (at protein level).

Its subcellular location is the cytoplasm. The protein resides in the myofibril. The protein localises to the sarcomere. It is found in the m line. Its function is as follows. Component of the sarcomeric M-band which plays a role in myocyte response to biomechanical stress. May regulate expression of other M-band proteins via an SRF-dependent pathway. Important for normal contractile function in heart. This is Leucine-rich repeat-containing protein 39 from Rattus norvegicus (Rat).